The following is a 124-amino-acid chain: Large ribosomal subunit protein bL12 (124 aa).

It belongs to the bacterial ribosomal protein bL12 family. Homodimer. Part of the ribosomal stalk of the 50S ribosomal subunit. Forms a multimeric L10(L12)X complex, where L10 forms an elongated spine to which 2 to 4 L12 dimers bind in a sequential fashion. Binds GTP-bound translation factors.

In terms of biological role, forms part of the ribosomal stalk which helps the ribosome interact with GTP-bound translation factors. Is thus essential for accurate translation. In Jannaschia sp. (strain CCS1), this protein is Large ribosomal subunit protein bL12.